A 394-amino-acid polypeptide reads, in one-letter code: MSARTVVLLGSTGSIGTQALDVVAAAPGRFQVVGLAAGGSDLELLARQAVAHDVPVVAVAAGEQDDVAAAIRAAGGRRTEVLTGPGAAADLAGRGADVVLNGITGSVGLAPTLAALEAGSTLALANKESLVAGAALVRAAQQRADQIVPVDSEHSAIAQALRSGARSEVARLVLTASGGPFRGWSREQMAGVTPEQALAHPTWAMGPVVTTNSATLMNKGLELIEAHVLFDVPVADITVVVHPQSVVHSMVEFVDGSTIAQASPPDMRLPIALGLAWPDRVPGAASPCRWDAATSWTFEPVDDAAFPALDLAREAVKASPLHPAVLNAANEEAVAAFLDGRLPFLDVVGTVARVLGEYPDPPDGALSLEGVQAAEAWARARSRALVADGPSRER.

Residues T12, G13, S14, I15, G38, and N126 each coordinate NADPH. K127 is a 1-deoxy-D-xylulose 5-phosphate binding site. E128 provides a ligand contact to NADPH. Position 151 (D151) interacts with Mn(2+). 1-deoxy-D-xylulose 5-phosphate-binding residues include S152, E153, S177, and H200. Residue E153 participates in Mn(2+) binding. G206 is a binding site for NADPH. S213, N218, K219, and E222 together coordinate 1-deoxy-D-xylulose 5-phosphate. E222 serves as a coordination point for Mn(2+).

This sequence belongs to the DXR family. It depends on Mg(2+) as a cofactor. Mn(2+) is required as a cofactor.

The enzyme catalyses 2-C-methyl-D-erythritol 4-phosphate + NADP(+) = 1-deoxy-D-xylulose 5-phosphate + NADPH + H(+). The protein operates within isoprenoid biosynthesis; isopentenyl diphosphate biosynthesis via DXP pathway; isopentenyl diphosphate from 1-deoxy-D-xylulose 5-phosphate: step 1/6. Functionally, catalyzes the NADPH-dependent rearrangement and reduction of 1-deoxy-D-xylulose-5-phosphate (DXP) to 2-C-methyl-D-erythritol 4-phosphate (MEP). In Beutenbergia cavernae (strain ATCC BAA-8 / DSM 12333 / CCUG 43141 / JCM 11478 / NBRC 16432 / NCIMB 13614 / HKI 0122), this protein is 1-deoxy-D-xylulose 5-phosphate reductoisomerase.